A 250-amino-acid chain; its full sequence is NADH-quinone oxidoreductase subunit C (250 aa).

It belongs to the complex I 30 kDa subunit family. In terms of assembly, NDH-1 is composed of 14 different subunits. Subunits NuoB, C, D, E, F, and G constitute the peripheral sector of the complex.

Its subcellular location is the cell inner membrane. It catalyses the reaction a quinone + NADH + 5 H(+)(in) = a quinol + NAD(+) + 4 H(+)(out). Functionally, NDH-1 shuttles electrons from NADH, via FMN and iron-sulfur (Fe-S) centers, to quinones in the respiratory chain. The immediate electron acceptor for the enzyme in this species is believed to be ubiquinone. Couples the redox reaction to proton translocation (for every two electrons transferred, four hydrogen ions are translocated across the cytoplasmic membrane), and thus conserves the redox energy in a proton gradient. The sequence is that of NADH-quinone oxidoreductase subunit C from Xylella fastidiosa (strain 9a5c).